The following is a 393-amino-acid chain: Argininosuccinate synthase (393 aa).

ATP-binding positions include 7 to 15 (AYSGGLDTS) and alanine 34. The L-citrulline site is built by tyrosine 85 and serine 90. ATP is bound at residue glycine 115. L-aspartate contacts are provided by threonine 117, asparagine 121, and aspartate 122. Asparagine 121 lines the L-citrulline pocket. L-citrulline contacts are provided by arginine 125, serine 176, serine 185, glutamate 261, and tyrosine 273.

Belongs to the argininosuccinate synthase family. Type 1 subfamily. As to quaternary structure, homotetramer.

It is found in the cytoplasm. The enzyme catalyses L-citrulline + L-aspartate + ATP = 2-(N(omega)-L-arginino)succinate + AMP + diphosphate + H(+). The protein operates within amino-acid biosynthesis; L-arginine biosynthesis; L-arginine from L-ornithine and carbamoyl phosphate: step 2/3. The polypeptide is Argininosuccinate synthase (Ehrlichia canis (strain Jake)).